The sequence spans 396 residues: Pectinesterase (396 aa).

A signal peptide spans 1–26 (MQSTTLYLKTAAFLGGCSLFAATALA). Thr-174 lines the substrate pocket. The Proton donor role is filled by Asp-232. Residue Asp-259 is the Nucleophile of the active site. The substrate site is built by Arg-324 and Trp-326.

It belongs to the pectinesterase family.

It is found in the secreted. The catalysed reaction is [(1-&gt;4)-alpha-D-galacturonosyl methyl ester](n) + n H2O = [(1-&gt;4)-alpha-D-galacturonosyl](n) + n methanol + n H(+). It functions in the pathway glycan metabolism; pectin degradation; 2-dehydro-3-deoxy-D-gluconate from pectin: step 1/5. Involved in maceration and soft-rotting of plant tissue. The protein is Pectinesterase (pme) of Ralstonia solanacearum (Pseudomonas solanacearum).